Reading from the N-terminus, the 127-residue chain is Phosphoribosyl-AMP cyclohydrolase (127 aa).

Residue Asp83 participates in Mg(2+) binding. Residue Cys84 participates in Zn(2+) binding. Positions 85 and 87 each coordinate Mg(2+). Residues Cys100 and Cys107 each contribute to the Zn(2+) site.

Belongs to the PRA-CH family. In terms of assembly, homodimer. Mg(2+) serves as cofactor. Zn(2+) is required as a cofactor.

Its subcellular location is the cytoplasm. The enzyme catalyses 1-(5-phospho-beta-D-ribosyl)-5'-AMP + H2O = 1-(5-phospho-beta-D-ribosyl)-5-[(5-phospho-beta-D-ribosylamino)methylideneamino]imidazole-4-carboxamide. It functions in the pathway amino-acid biosynthesis; L-histidine biosynthesis; L-histidine from 5-phospho-alpha-D-ribose 1-diphosphate: step 3/9. Catalyzes the hydrolysis of the adenine ring of phosphoribosyl-AMP. This Methanocaldococcus jannaschii (strain ATCC 43067 / DSM 2661 / JAL-1 / JCM 10045 / NBRC 100440) (Methanococcus jannaschii) protein is Phosphoribosyl-AMP cyclohydrolase.